A 403-amino-acid chain; its full sequence is Formin-like protein 21b (403 aa).

The FH2 domain maps to Met-1–Lys-380. The tract at residues Ala-373 to Ile-403 is disordered.

Belongs to the formin-like family. Class-II subfamily.

The chain is Formin-like protein 21b (FH21B) from Arabidopsis thaliana (Mouse-ear cress).